We begin with the raw amino-acid sequence, 145 residues long: 3-dehydroquinate dehydratase (145 aa).

Tyr-22 functions as the Proton acceptor in the catalytic mechanism. Residues Asn-71, His-77, and Asp-84 each coordinate substrate. The Proton donor role is filled by His-97. Residues 98 to 99 and Arg-108 contribute to the substrate site; that span reads IS.

The protein belongs to the type-II 3-dehydroquinase family. In terms of assembly, homododecamer.

It carries out the reaction 3-dehydroquinate = 3-dehydroshikimate + H2O. It functions in the pathway metabolic intermediate biosynthesis; chorismate biosynthesis; chorismate from D-erythrose 4-phosphate and phosphoenolpyruvate: step 3/7. Catalyzes a trans-dehydration via an enolate intermediate. In Thermotoga neapolitana (strain ATCC 49049 / DSM 4359 / NBRC 107923 / NS-E), this protein is 3-dehydroquinate dehydratase.